Reading from the N-terminus, the 436-residue chain is GTPase Der (436 aa).

2 consecutive EngA-type G domains span residues 4–167 (PIVA…NKES) and 176–351 (IRLS…ENHK). GTP-binding positions include 10 to 17 (GKPNVGKS), 57 to 61 (DTGGI), 119 to 122 (NKVD), 182 to 189 (GRPNVGKS), 229 to 233 (DTAGM), and 294 to 297 (NKWD). The region spanning 352 to 436 (KRVQSSTLNE…PIHIIPRKRN (85 aa)) is the KH-like domain.

The protein belongs to the TRAFAC class TrmE-Era-EngA-EngB-Septin-like GTPase superfamily. EngA (Der) GTPase family. Associates with the 50S ribosomal subunit.

In terms of biological role, GTPase that plays an essential role in the late steps of ribosome biogenesis. The protein is GTPase Der of Staphylococcus epidermidis (strain ATCC 35984 / DSM 28319 / BCRC 17069 / CCUG 31568 / BM 3577 / RP62A).